The sequence spans 157 residues: Nascent polypeptide-associated complex subunit alpha (157 aa).

Residues 6-71 (TTDESHIHKT…LGSPVNLHQL (66 aa)) enclose the NAC-A/B domain. Residues 81-107 (SSKDQEGPGLYDEIHSDPQEDGVKEAE) are compositionally biased toward basic and acidic residues. A disordered region spans residues 81–116 (SSKDQEGPGLYDEIHSDPQEDGVKEAEEITVDPSDE). The 40-residue stretch at 118-157 (LSEEDIKLISSQVKASRNDIIKALVESEYDVVDAMMKLTK) folds into the UBA domain.

Belongs to the NAC-alpha family.

Its subcellular location is the cytoplasm. The protein localises to the nucleus. May be involved in mitochondrial protein import by enhancing productive ribosome interactions with the outer mitochondrial membrane and blocks the inappropriate interaction of ribosomes translating non-secretory nascent polypeptides with translocation sites in the membrane of the endoplasmic reticulum. EGD2 may also be involved in transcription regulation. This is Nascent polypeptide-associated complex subunit alpha (EGD2) from Encephalitozoon cuniculi (strain GB-M1) (Microsporidian parasite).